Here is a 190-residue protein sequence, read N- to C-terminus: Threonylcarbamoyl-AMP synthase (190 aa).

Residues 7–190 form the YrdC-like domain; that stretch reads SQDVASLVIA…ALSGELIRQG (184 aa).

This sequence belongs to the SUA5 family. TsaC subfamily.

The protein resides in the cytoplasm. It carries out the reaction L-threonine + hydrogencarbonate + ATP = L-threonylcarbamoyladenylate + diphosphate + H2O. Its function is as follows. Required for the formation of a threonylcarbamoyl group on adenosine at position 37 (t(6)A37) in tRNAs that read codons beginning with adenine. Catalyzes the conversion of L-threonine, HCO(3)(-)/CO(2) and ATP to give threonylcarbamoyl-AMP (TC-AMP) as the acyladenylate intermediate, with the release of diphosphate. The polypeptide is Threonylcarbamoyl-AMP synthase (Sodalis glossinidius (strain morsitans)).